We begin with the raw amino-acid sequence, 325 residues long: GMP reductase (325 aa).

Residue C174 is the Thioimidate intermediate of the active site. 203 to 226 is a binding site for NADP(+); the sequence is IIADGGLRTHGDIAKSIRFGATMV.

This sequence belongs to the IMPDH/GMPR family. GuaC type 2 subfamily.

It carries out the reaction IMP + NH4(+) + NADP(+) = GMP + NADPH + 2 H(+). Catalyzes the irreversible NADPH-dependent deamination of GMP to IMP. It functions in the conversion of nucleobase, nucleoside and nucleotide derivatives of G to A nucleotides, and in maintaining the intracellular balance of A and G nucleotides. This is GMP reductase from Staphylococcus epidermidis (strain ATCC 35984 / DSM 28319 / BCRC 17069 / CCUG 31568 / BM 3577 / RP62A).